Consider the following 200-residue polypeptide: MNPRKKVDLKLIIIGALGVGKTSLLHRYVHKTFYEDYQTTLGASILSKIIILEDTTLKLQIWDTGGQERFRSMVSTFYKGSDGCVLAFDVTDLESFEALETWRGDVLAKTIPMEQPYPMVVLGNKIDLEDRQVPQEVAQGWCKEKDIPYFEVSAKNDINVVQAFEMLASRALSRYRSILESYLTDSIKLSPEDQPKSRCC.

Residues 15-22 (GALGVGKT), 34-40 (YEDYQTT), 63-67 (DTGGQ), 124-127 (NKID), and 154-155 (AK) contribute to the GTP site. 2 short sequence motifs (switch) span residues 28–41 (YVHK…QTTL) and 67–82 (QERF…KGSD). Ser-186 bears the Phosphoserine mark. S-geranylgeranyl cysteine attachment occurs at residues Cys-199 and Cys-200.

Belongs to the small GTPase superfamily. Rab family.

The protein localises to the late endosome. It localises to the lysosome. The protein resides in the golgi apparatus. It is found in the trans-Golgi network. Its subcellular location is the cytoplasmic vesicle. The protein localises to the phagosome. It localises to the phagosome membrane. Its function is as follows. Controls vesicular trafficking from endosomes to the trans-Golgi network (TGN). Acts as a negative regulator of TLR9 signaling and can suppress TLR9-triggered TNFA, IL6, and IFNB production in macrophages by promoting TLR9 lysosomal degradation. Also negatively regulates TLR4 signaling in macrophages by promoting lysosomal degradation of TLR4. Promotes megakaryocytic differentiation by increasing NF-kappa-B-dependent IL6 production and subsequently enhancing the association of STAT3 with GATA1. Not involved in the regulation of the EGF- and EGFR degradation pathway. The protein is Ras-related protein Rab-7b (RAB7B) of Bos taurus (Bovine).